The primary structure comprises 695 residues: Polyribonucleotide nucleotidyltransferase (695 aa).

Mg(2+) is bound by residues D486 and D492. Residues 553–612 (PRIETMQINTSKIATVIGPGGKQIRQIIERSGAQVDINDDGVINIAASTQESINKAKELI) form the KH domain. Residues 622 to 690 (GKVYNGRVTS…EKGQLKLSHK (69 aa)) enclose the S1 motif domain.

Belongs to the polyribonucleotide nucleotidyltransferase family. Requires Mg(2+) as cofactor.

Its subcellular location is the cytoplasm. It catalyses the reaction RNA(n+1) + phosphate = RNA(n) + a ribonucleoside 5'-diphosphate. Its function is as follows. Involved in mRNA degradation. Catalyzes the phosphorolysis of single-stranded polyribonucleotides processively in the 3'- to 5'-direction. The protein is Polyribonucleotide nucleotidyltransferase of Chlamydia trachomatis serovar A (strain ATCC VR-571B / DSM 19440 / HAR-13).